We begin with the raw amino-acid sequence, 133 residues long: Small ribosomal subunit protein uS8 (133 aa).

It belongs to the universal ribosomal protein uS8 family. Part of the 30S ribosomal subunit. Contacts proteins S5 and S12.

In terms of biological role, one of the primary rRNA binding proteins, it binds directly to 16S rRNA central domain where it helps coordinate assembly of the platform of the 30S subunit. This is Small ribosomal subunit protein uS8 from Thermosynechococcus vestitus (strain NIES-2133 / IAM M-273 / BP-1).